A 182-amino-acid chain; its full sequence is UPF0316 protein BCAH820_3389 (182 aa).

3 consecutive transmembrane segments (helical) span residues 6-26, 32-52, and 58-78; these read LIFVLQIIYVPILTIRTILLV, SAAAVGLLEGAIYIVSLGIVF, and WMNIVAYVIGFSAGLLLGGYI.

This sequence belongs to the UPF0316 family.

The protein localises to the cell membrane. This Bacillus cereus (strain AH820) protein is UPF0316 protein BCAH820_3389.